The sequence spans 539 residues: M protein, serotype 24 (539 aa).

A signal peptide spans 1–42 (MTKNNTNRHYSLRKLKTGTASVAVALTVLGAGLVVNTNEVSA). An A-1 repeat occupies 118 to 152 (LEARKADLEKALEGAMNFSTADSAKIKTLEAEKAA). The segment at 118–301 (LEARKADLEK…ALEAEKADLE (184 aa)) is 5.3 X 35 AA tandem repeats, A-type. The A-2 repeat unit spans residues 153–187 (LAARKADLEKALEGAMNFSTADSAKIKTLEAEKAA). An A-3 repeat occupies 188–222 (LEARQAELEKALEGAMNFSTADSAKIKTLEAEKAA). The A-4 repeat unit spans residues 223 to 257 (LAARKADLEKALEGAMNFSTADSAKIKTLEAEKAA). The A-5 repeat unit spans residues 258–292 (LEARQAELEKALEGAMNFSTADSAKIKTLEAEKAA). The stretch at 293–297 (LEAEK) is one A-6; truncated repeat. The interval 297-401 (KADLEHQSQV…REAKKQVEKA (105 aa)) is disordered. C repeat units follow at residues 298-332 (ADLEHQSQVLNANRQSLRRDLDASREAKKQLEAEH), 333-367 (QKLEEQNKISEASRQSLRRDLDASREAKKQLEAEH), and 368-402 (QKLEEQNKISEASRQSLRRDLDASREAKKQVEKAL). Over residues 303–312 (QSQVLNANRQ) the composition is skewed to polar residues. Composition is skewed to basic and acidic residues over residues 314 to 340 (LRRDLDASREAKKQLEAEHQKLEEQNK), 349 to 375 (LRRDLDASREAKKQLEAEHQKLEEQNK), and 384 to 401 (LRRDLDASREAKKQVEKA). 4 D repeats span residues 435–440 (AKLEAE), 441–446 (AKALKE), 449–454 (AKQAEE), and 456–461 (AKLRAG). The disordered stretch occupies residues 456–511 (AKLRAGKASDSQTPDAKPGNKAVPGKGQAPQAGTKPNQNKAPMKETKRQLPSTGET). The short motif at 505–509 (LPSTG) is the LPXTG sorting signal element. Residue Thr508 is modified to Pentaglycyl murein peptidoglycan amidated threonine. Residues 509 to 539 (GETANPFFTAAALTVMATAGVAAVVKRKEEN) constitute a propeptide, removed by sortase.

The protein belongs to the M protein family.

Its subcellular location is the secreted. It localises to the cell wall. Its function is as follows. This protein is one of the different antigenic serotypes of protein M. Protein M is closely associated with virulence of the bacterium and can render the organism resistant to phagocytosis. The sequence is that of M protein, serotype 24 (emm24) from Streptococcus pyogenes.